Here is a 323-residue protein sequence, read N- to C-terminus: Transaldolase (323 aa).

Catalysis depends on lysine 131, which acts as the Schiff-base intermediate with substrate.

Belongs to the transaldolase family. Type 1 subfamily. In terms of assembly, homodimer.

The protein resides in the cytoplasm. The catalysed reaction is D-sedoheptulose 7-phosphate + D-glyceraldehyde 3-phosphate = D-erythrose 4-phosphate + beta-D-fructose 6-phosphate. It participates in carbohydrate degradation; pentose phosphate pathway; D-glyceraldehyde 3-phosphate and beta-D-fructose 6-phosphate from D-ribose 5-phosphate and D-xylulose 5-phosphate (non-oxidative stage): step 2/3. In terms of biological role, transaldolase is important for the balance of metabolites in the pentose-phosphate pathway. This chain is Transaldolase, found in Blochmanniella floridana.